Here is a 291-residue protein sequence, read N- to C-terminus: tRNA dimethylallyltransferase (291 aa).

Residue 9–16 coordinates ATP; sequence GTTASGKT. Substrate is bound at residue 11-16; sequence TASGKT. Positions 34–37 are interaction with substrate tRNA; the sequence is DSLC.

The protein belongs to the IPP transferase family. Monomer. Mg(2+) is required as a cofactor.

The catalysed reaction is adenosine(37) in tRNA + dimethylallyl diphosphate = N(6)-dimethylallyladenosine(37) in tRNA + diphosphate. Catalyzes the transfer of a dimethylallyl group onto the adenine at position 37 in tRNAs that read codons beginning with uridine, leading to the formation of N6-(dimethylallyl)adenosine (i(6)A). The sequence is that of tRNA dimethylallyltransferase from Campylobacter lari (strain RM2100 / D67 / ATCC BAA-1060).